Here is a 325-residue protein sequence, read N- to C-terminus: 33 kDa chaperonin (325 aa).

2 cysteine pairs are disulfide-bonded: cysteine 260–cysteine 262 and cysteine 293–cysteine 296.

Belongs to the HSP33 family. Under oxidizing conditions two disulfide bonds are formed involving the reactive cysteines. Under reducing conditions zinc is bound to the reactive cysteines and the protein is inactive.

Its subcellular location is the cytoplasm. Its function is as follows. Redox regulated molecular chaperone. Protects both thermally unfolding and oxidatively damaged proteins from irreversible aggregation. Plays an important role in the bacterial defense system toward oxidative stress. The chain is 33 kDa chaperonin from Aquifex aeolicus (strain VF5).